A 111-amino-acid chain; its full sequence is Ig kappa chain V-III region PC 7769 (111 aa).

A framework-1 region spans residues 1–23 (DIVLTQSPASLAVSLGQRATISC). C23 and C92 are disulfide-bonded. The complementarity-determining-1 stretch occupies residues 24–38 (KASQSVDYDGDSYMN). The segment at 39 to 53 (WYQQKPGQPPKVLIF) is framework-2. The complementarity-determining-2 stretch occupies residues 54-60 (AASNLES). Positions 61–92 (GIPARFSGSGSGTDFTLNIHPVEEEDAATYYC) are framework-3. The segment at 93–101 (QQSNEDPWT) is complementarity-determining-3. The framework-4 stretch occupies residues 102–111 (FGSGTKLEIK).

The sequence is that of Ig kappa chain V-III region PC 7769 from Mus musculus (Mouse).